A 114-amino-acid polypeptide reads, in one-letter code: Cytochrome c oxidase subunit 7A2-like, mitochondrial (114 aa).

A mitochondrion-targeting transit peptide spans 1–55 (MYYKFSGFTQKLAGAWASEAYSPQGLKPVVSTEAPPIIFATPTKLTSDSTVYDYA). Lysine 69 is modified (N6-acetyllysine). A helical membrane pass occupies residues 82–107 (PDQMLYRTTMALTVGGTIYCLIALYM).

It belongs to the cytochrome c oxidase VIIa family. Interacts with the mitochondrial respiratory complexes III (CIII) and IV (CIV), promoting their association.

Its subcellular location is the mitochondrion inner membrane. Assembly factor that mediates the formation of some mitochondrial respiratory supercomplexes (respirasomes), thereby promoting oxidative phosphorylation and energy metabolism. Acts as a molecular adapter that associates with both mitochondrial respiratory complexes III (CIII) and IV (CIV), promoting their association. Mediates the formation of various mitochondrial respiratory supercomplexes, such as MCIII(2)IV(2), composed of two CIII and two CIV, and the CS-respirasome (MCI(1)III(2)IV(2)), composed of one CI, two CIII and two CIV. Not involved in the formation of the canonical respirasome (MCI(1)III(2)IV(1)), composed of one CI, two CIII and one CIV. The formation of different respirasomes is important for cell adaptation to oxygen conditions and prevent metabolic exhaustion: supercomplexes mediated by COX7A2L/SCAF1 are required to maintain oxidative phosphorylation upon low oxygen conditions and promote metabolic rewiring toward glycolysis. This is Cytochrome c oxidase subunit 7A2-like, mitochondrial from Homo sapiens (Human).